The sequence spans 333 residues: Ribose-phosphate pyrophosphokinase (333 aa).

An ATP-binding site is contributed by 58 to 60; sequence DGE. Mg(2+)-binding residues include histidine 151 and aspartate 190. Residue lysine 214 is part of the active site. D-ribose 5-phosphate contacts are provided by residues arginine 216, aspartate 240, and 244 to 248; that span reads DTAGT.

Belongs to the ribose-phosphate pyrophosphokinase family. Class I subfamily. Homohexamer. Requires Mg(2+) as cofactor.

The protein localises to the cytoplasm. The enzyme catalyses D-ribose 5-phosphate + ATP = 5-phospho-alpha-D-ribose 1-diphosphate + AMP + H(+). It functions in the pathway metabolic intermediate biosynthesis; 5-phospho-alpha-D-ribose 1-diphosphate biosynthesis; 5-phospho-alpha-D-ribose 1-diphosphate from D-ribose 5-phosphate (route I): step 1/1. Involved in the biosynthesis of the central metabolite phospho-alpha-D-ribosyl-1-pyrophosphate (PRPP) via the transfer of pyrophosphoryl group from ATP to 1-hydroxyl of ribose-5-phosphate (Rib-5-P). The chain is Ribose-phosphate pyrophosphokinase from Synechocystis sp. (strain ATCC 27184 / PCC 6803 / Kazusa).